The chain runs to 109 residues: V-type proton ATPase 16 kDa proteolipid subunit (109 aa).

Residues 1–20 (VPVVMAGVLGIYGLIIAVII) form a helical membrane-spanning segment. The Lumenal portion of the chain corresponds to 21–39 (STGINPKAKPYYLFDGYAH). Residues 40 to 61 (LSSGLACGLAGLAAGMAIGIVG) traverse the membrane as a helical segment. The Cytoplasmic portion of the chain corresponds to 62–73 (DAGVRANAQQPK). The chain crosses the membrane as a helical span at residues 74-99 (LFVGMILILIFAEALALYGLIVGIIL). At 100–109 (SSRAGQSRAD) the chain is on the lumenal side.

This sequence belongs to the V-ATPase proteolipid subunit family. As to quaternary structure, V-ATPase is a heteromultimeric enzyme composed of a peripheral catalytic V1 complex (main components: subunits A, B, C, D, E, and F) attached to an integral membrane V0 proton pore complex (main component: the proteolipid protein; which is present as a hexamer that forms the proton-conducting pore). As to expression, high expression in the mesocotyl tip of etiolated seedlings compared to the base.

The protein localises to the vacuole membrane. Its function is as follows. Proton-conducting pore forming subunit of the membrane integral V0 complex of vacuolar ATPase. V-ATPase is responsible for acidifying a variety of intracellular compartments in eukaryotic cells. This chain is V-type proton ATPase 16 kDa proteolipid subunit, found in Zea mays (Maize).